A 359-amino-acid chain; its full sequence is DNA-directed RNA polymerase RPB3-11 homolog (359 aa).

The protein in the N-terminal section; belongs to the archaeal RpoD/eukaryotic RPB3 RNA polymerase subunit family. In the C-terminal section; belongs to the archaeal RpoL/eukaryotic RPB11/RPC19 RNA polymerase subunit family. As to quaternary structure, part of the viral DNA-directed RNA polymerase that consists of 8 polII-like subunits (RPB1, RPB2, RPB3, RPB5, RPB6, RPB7, RPB9, RPB10), a capping enzyme and a termination factor.

It is found in the host cytoplasm. Its subcellular location is the virion. Its function is as follows. Component of the DNA-directed RNA polymerase (RNAP) that catalyzes the transcription in the cytoplasm of viral DNA into RNA using the four ribonucleoside triphosphates as substrates. This Ornithodoros (relapsing fever ticks) protein is DNA-directed RNA polymerase RPB3-11 homolog.